Consider the following 170-residue polypeptide: Pollen-specific protein C13 (170 aa).

A signal peptide spans 1 to 27; sequence MASVPAPATTTAAVILCLCVVLSCAAA. 3 disulfide bridges follow: cysteine 43–cysteine 114, cysteine 46–cysteine 155, and cysteine 67–cysteine 102. N-linked (GlcNAc...) asparagine glycosylation is present at asparagine 53.

Belongs to the Ole e I family. As to expression, pollen.

This is Pollen-specific protein C13 (MGS1) from Zea mays (Maize).